The sequence spans 313 residues: Ribosomal RNA small subunit methyltransferase H (313 aa).

S-adenosyl-L-methionine-binding positions include G35 to H37, D55, F80, D102, and Q109.

The protein belongs to the methyltransferase superfamily. RsmH family.

It localises to the cytoplasm. The catalysed reaction is cytidine(1402) in 16S rRNA + S-adenosyl-L-methionine = N(4)-methylcytidine(1402) in 16S rRNA + S-adenosyl-L-homocysteine + H(+). Its function is as follows. Specifically methylates the N4 position of cytidine in position 1402 (C1402) of 16S rRNA. In Shewanella baltica (strain OS223), this protein is Ribosomal RNA small subunit methyltransferase H.